The chain runs to 356 residues: tRNA N6-adenosine threonylcarbamoyltransferase (356 aa).

Positions 122, 126, and 143 each coordinate a divalent metal cation. Residues 143–147 (YVSGG), Asp-175, Gly-190, Glu-194, and Asn-287 contribute to the substrate site. An a divalent metal cation-binding site is contributed by Asp-315.

This sequence belongs to the KAE1 / TsaD family. Component of the EKC/KEOPS complex composed of at least BUD32, CGI121, GON7, KAE1 and PCC1; the whole complex dimerizes. A divalent metal cation is required as a cofactor.

It is found in the cytoplasm. Its subcellular location is the nucleus. The catalysed reaction is L-threonylcarbamoyladenylate + adenosine(37) in tRNA = N(6)-L-threonylcarbamoyladenosine(37) in tRNA + AMP + H(+). In terms of biological role, component of the EKC/KEOPS complex that is required for the formation of a threonylcarbamoyl group on adenosine at position 37 (t(6)A37) in tRNAs that read codons beginning with adenine. The complex is probably involved in the transfer of the threonylcarbamoyl moiety of threonylcarbamoyl-AMP (TC-AMP) to the N6 group of A37. KAE1 likely plays a direct catalytic role in this reaction, but requires other protein(s) of the complex to fulfill this activity. The EKC/KEOPS complex also promotes both telomere uncapping and telomere elongation. The complex is required for efficient recruitment of transcriptional coactivators. This Chaetomium globosum (strain ATCC 6205 / CBS 148.51 / DSM 1962 / NBRC 6347 / NRRL 1970) (Soil fungus) protein is tRNA N6-adenosine threonylcarbamoyltransferase.